Here is a 299-residue protein sequence, read N- to C-terminus: Deoxyribonuclease-1-like 2 (299 aa).

Positions 1-20 (MGGPRALLAALWALEAAGTA) are cleaved as a signal peptide. Catalysis depends on residues E99 and H170. Cysteines 209 and 245 form a disulfide.

The protein belongs to the DNase I family. Mg(2+) serves as cofactor. The cofactor is Ca(2+). In terms of tissue distribution, preferentially expressed in the skin and up-regulated during keratinocytes differentiation. Highly abundant (at protein level) in the stratum granulosum.

It localises to the cytoplasm. The protein localises to the secreted. Functionally, divalent cation-dependent acid DNA endonuclease involved in the breakdown of the nucleus during corneocyte formation of epidermal keratinocytes. May play an immune role by eliminating harmful DNA released into the extracellular environment by damaged epidermal cells. The protein is Deoxyribonuclease-1-like 2 (DNASE1L2) of Homo sapiens (Human).